Consider the following 315-residue polypeptide: Deoxyribonuclease-1-like 1 (315 aa).

Positions 1–29 are cleaved as a signal peptide; that stretch reads MDSSGGFQKHTCGHALLLLLLLLAGGAEA. Active-site residues include E108 and H159. C198 and C235 are joined by a disulfide. N-linked (GlcNAc...) asparagine glycosylation occurs at N272.

This sequence belongs to the DNase I family.

It localises to the endoplasmic reticulum. The protein is Deoxyribonuclease-1-like 1 (DNASE1L1) of Sus scrofa (Pig).